Consider the following 116-residue polypeptide: UPF0134 protein MPN_038 (116 aa).

It belongs to the UPF0134 family.

This Mycoplasma pneumoniae (strain ATCC 29342 / M129 / Subtype 1) (Mycoplasmoides pneumoniae) protein is UPF0134 protein MPN_038.